A 64-amino-acid polypeptide reads, in one-letter code: Probable spore germination protein GerPD (64 aa).

Required for the formation of functionally normal spores. Could be involved in the establishment of normal spore coat structure and/or permeability, which allows the access of germinants to their receptor. This is Probable spore germination protein GerPD (gerPD) from Bacillus cereus.